We begin with the raw amino-acid sequence, 205 residues long: Small ribosomal subunit protein uS4c (205 aa).

A disordered region spans residues 16 to 40 (GKLPSLTNKTSKKRKSPGQPATSFK). The S4 RNA-binding domain occupies 93–161 (MRLDNIVHRI…IQKNIESKEL (69 aa)).

The protein belongs to the universal ribosomal protein uS4 family. Part of the 30S ribosomal subunit. Contacts protein S5. The interaction surface between S4 and S5 is involved in control of translational fidelity.

The protein localises to the plastid. The protein resides in the chloroplast. Its function is as follows. One of the primary rRNA binding proteins, it binds directly to 16S rRNA where it nucleates assembly of the body of the 30S subunit. With S5 and S12 plays an important role in translational accuracy. The polypeptide is Small ribosomal subunit protein uS4c (rps4) (Euglena gracilis).